We begin with the raw amino-acid sequence, 187 residues long: CRISPR system Cmr subunit Cmr1-2 (187 aa).

It belongs to the CRISPR system Cmr1 family. As to quaternary structure, part of the type III-B Cmr ribonucleoprotein (RNP) complex. This is an elongated RNP with Cmr2 and Cmr3 as the base, with Cmr4 and Cmr5 forming a helical core along the mature crRNA (39 or 45 nt in length), while the complex is capped by Cmr6 and Cmr1. The 5' end of the crRNA is bound to Cmr2 and Cmr3, while Cmr6 and a Cmr1 subunit (Cmr1-1 or Cmr1-2) cap the 3' end of the crRNA. The target RNA lies antiparallel to the crRNA, with its 5' end near Cmr1 and Cmr6 and its 3' end near Cmr2 and Cmr3; major target cleavage occurs nears the junction of Cmr1/Cmr6 and Cmr4/Cmr, with minor cleavage occurring at 6 nt intervals which coincide with the proposed spacing of Cmr4 subunits.

The protein localises to the cytoplasm. Its function is as follows. CRISPR (clustered regularly interspaced short palindromic repeat), is an adaptive immune system that provides protection against mobile genetic elements (viruses, transposable elements and conjugative plasmids). CRISPR clusters contain sequences complementary to antecedent mobile elements and target invading nucleic acids. CRISPR clusters are transcribed and processed into CRISPR RNA (crRNA), formerly called psiRNA (prokaryotic silencing) in this organism. Part of the Cmr ribonucleoprotein complex which has divalent cation-dependent endoribonuclease activity specific for ssRNA complementary to the crRNA (target RNA), generating 5' hydroxy- and 3' phosphate or 2'-3' cyclic phosphate termini. Cmr4 is probably the subunit that cleaves target RNA. Cmr complex does not cleave ssDNA complementary to the crRNA. Cleavage of invading RNA is guided by the crRNA; substrate cleavage occurs a fixed distance (14 nt) from the 3' end of the crRNA. In vitro reconstitution shows Cmr1-2 and Cmr5 are not absolutely necessary for target cleavage. The chain is CRISPR system Cmr subunit Cmr1-2 from Pyrococcus furiosus (strain ATCC 43587 / DSM 3638 / JCM 8422 / Vc1).